Here is an 86-residue protein sequence, read N- to C-terminus: U1-theraphotoxin-Pc1a (86 aa).

The signal sequence occupies residues Met1–Gly21. Residues His22–Glu49 constitute a propeptide that is removed on maturation. Cystine bridges form between Cys53-Cys70, Cys60-Cys75, and Cys69-Cys80. Val84 is subject to Valine amide.

In terms of tissue distribution, expressed by the venom gland.

The protein localises to the secreted. In terms of biological role, possesses strong antiplasmodial activity against the intra-erythrocyte stage of P.falciparum in vitro. IC(50) for inhibiting P.falciparum growth is 1.59 uM. Interacts with infected and healthy erythrocytes. Does not lyse erythrocytes, is not cytotoxic to nucleated mammalian cells, and does not inhibit neuromuscular function. Has neither antibacterial nor antifungal activity. In Psalmopoeus cambridgei (Trinidad chevron tarantula), this protein is U1-theraphotoxin-Pc1a.